The primary structure comprises 275 residues: Exosome complex component RRP40 (275 aa).

At Ala-2 the chain carries N-acetylalanine. A Glycyl lysine isopeptide (Lys-Gly) (interchain with G-Cter in SUMO2) cross-link involves residue Lys-151.

Belongs to the RRP40 family. Component of the RNA exosome core complex (Exo-9), composed of EXOSC1, EXOSC2, EXOSC3, EXOSC4, EXOSC5, EXOSC6, EXOSC7, EXOSC8 and EXOSC9; within the complex interacts with EXOSC5 and EXOSC9. The catalytically inactive RNA exosome core complex (Exo-9) associates with the catalytic subunit EXOSC10/RRP6. Exo-9 may associate with DIS3 to form the nucleolar exosome complex, or DIS3L to form the cytoplasmic exosome complex. Exo-9 is formed by a hexameric base ring consisting of the heterodimers EXOSC4-EXOSC9, EXOSC5-EXOSC8 and EXOSC6-EXOSC7, and a cap ring consisting of EXOSC1, EXOSC2 and EXOSC3. The RNA exosome complex associates with cofactors C1D/RRP47, MPHOSPH6/MPP6 and MTREX/MTR4. Interacts with MPHOSPH6/MPP6; the interaction is direct. Interacts with GTPBP1. Interacts with ZC3HAV1. Interacts with DDX17 only in the presence of ZC3HAV1 in an RNA-independent manner. Interacts with DHX36; this interaction occurs in a RNase-insensitive manner. Interacts with HBS1L isoform 2.

The protein resides in the cytoplasm. It is found in the nucleus. The protein localises to the nucleolus. Non-catalytic component of the RNA exosome complex which has 3'-&gt;5' exoribonuclease activity and participates in a multitude of cellular RNA processing and degradation events. In the nucleus, the RNA exosome complex is involved in proper maturation of stable RNA species such as rRNA, snRNA and snoRNA, in the elimination of RNA processing by-products and non-coding 'pervasive' transcripts, such as antisense RNA species and promoter-upstream transcripts (PROMPTs), and of mRNAs with processing defects, thereby limiting or excluding their export to the cytoplasm. The RNA exosome may be involved in Ig class switch recombination (CSR) and/or Ig variable region somatic hypermutation (SHM) by targeting AICDA deamination activity to transcribed dsDNA substrates. In the cytoplasm, the RNA exosome complex is involved in general mRNA turnover and specifically degrades inherently unstable mRNAs containing AU-rich elements (AREs) within their 3' untranslated regions, and in RNA surveillance pathways, preventing translation of aberrant mRNAs. It seems to be involved in degradation of histone mRNA. The catalytic inactive RNA exosome core complex of 9 subunits (Exo-9) is proposed to play a pivotal role in the binding and presentation of RNA for ribonucleolysis, and to serve as a scaffold for the association with catalytic subunits and accessory proteins or complexes. EXOSC3 as peripheral part of the Exo-9 complex stabilizes the hexameric ring of RNase PH-domain subunits through contacts with EXOSC9 and EXOSC5. The protein is Exosome complex component RRP40 (EXOSC3) of Homo sapiens (Human).